Consider the following 87-residue polypeptide: Small ribosomal subunit protein bS20 (87 aa).

Over residues M1–A11 the composition is skewed to basic residues. The segment at M1–M27 is disordered.

The protein belongs to the bacterial ribosomal protein bS20 family.

Its function is as follows. Binds directly to 16S ribosomal RNA. This Histophilus somni (strain 129Pt) (Haemophilus somnus) protein is Small ribosomal subunit protein bS20.